The primary structure comprises 273 residues: Shikimate dehydrogenase (NADP(+)) (273 aa).

Shikimate-binding positions include 14-16 (SKS) and threonine 61. Lysine 65 functions as the Proton acceptor in the catalytic mechanism. 2 residues coordinate shikimate: asparagine 86 and aspartate 102. Residues 126–130 (GAGGA), 150–155 (NRTHAK), and methionine 213 each bind NADP(+). Tyrosine 215 contributes to the shikimate binding site. An NADP(+)-binding site is contributed by glycine 237.

Belongs to the shikimate dehydrogenase family. As to quaternary structure, homodimer.

It carries out the reaction shikimate + NADP(+) = 3-dehydroshikimate + NADPH + H(+). It functions in the pathway metabolic intermediate biosynthesis; chorismate biosynthesis; chorismate from D-erythrose 4-phosphate and phosphoenolpyruvate: step 4/7. Involved in the biosynthesis of the chorismate, which leads to the biosynthesis of aromatic amino acids. Catalyzes the reversible NADPH linked reduction of 3-dehydroshikimate (DHSA) to yield shikimate (SA). The sequence is that of Shikimate dehydrogenase (NADP(+)) from Aeromonas salmonicida (strain A449).